A 150-amino-acid chain; its full sequence is NmrA-like family domain-containing protein 1 (150 aa).

NADP(+) contacts are provided by residues 7-12 (GATGAQ), 33-37 (RNPEQ), and Lys-71.

This sequence belongs to the NmrA-type oxidoreductase family. In terms of assembly, homodimer. Interacts with ASS1. Interaction is enhanced by low NADPH/NADP(+) ratios, which results in inhibition of ASS1 activity.

It is found in the cytoplasm. It localises to the perinuclear region. Its subcellular location is the nucleus. Its function is as follows. Redox sensor protein. Undergoes restructuring and subcellular redistribution in response to changes in intracellular NADPH/NADP(+) levels. At low NADPH concentrations the protein is found mainly as a monomer, and binds argininosuccinate synthase (ASS1), the enzyme involved in nitric oxide synthesis. Association with ASS1 impairs its activity and reduces the production of nitric oxide, which subsecuently prevents apoptosis. Under normal NADPH concentrations, the protein is found as a dimer and hides the binding site for ASS1. The homodimer binds one molecule of NADPH. Has higher affinity for NADPH than for NADP(+). Binding to NADPH is necessary to form a stable dimer. This chain is NmrA-like family domain-containing protein 1, found in Rattus norvegicus (Rat).